A 185-amino-acid chain; its full sequence is Large ribosomal subunit protein uL16m (185 aa).

Belongs to the universal ribosomal protein uL16 family.

It is found in the mitochondrion. The chain is Large ribosomal subunit protein uL16m (RPL16) from Oryza sativa subsp. japonica (Rice).